A 242-amino-acid polypeptide reads, in one-letter code: Methylthioribulose-1-phosphate dehydratase (242 aa).

Cysteine 97 serves as a coordination point for substrate. The Zn(2+) site is built by histidine 115 and histidine 117. The Proton donor/acceptor role is filled by glutamate 139. Histidine 195 is a Zn(2+) binding site.

It belongs to the aldolase class II family. MtnB subfamily. Homotetramer. Interacts with APAF1. May interact with CASP1. It depends on Zn(2+) as a cofactor.

It is found in the cytoplasm. The enzyme catalyses 5-(methylsulfanyl)-D-ribulose 1-phosphate = 5-methylsulfanyl-2,3-dioxopentyl phosphate + H2O. It functions in the pathway amino-acid biosynthesis; L-methionine biosynthesis via salvage pathway; L-methionine from S-methyl-5-thio-alpha-D-ribose 1-phosphate: step 2/6. Its function is as follows. Catalyzes the dehydration of methylthioribulose-1-phosphate (MTRu-1-P) into 2,3-diketo-5-methylthiopentyl-1-phosphate (DK-MTP-1-P). Functions in the methionine salvage pathway, which plays a key role in cancer, apoptosis, microbial proliferation and inflammation. May inhibit the CASP1-related inflammatory response (pyroptosis), the CASP9-dependent apoptotic pathway and the cytochrome c-dependent and APAF1-mediated cell death. The chain is Methylthioribulose-1-phosphate dehydratase from Bos taurus (Bovine).